The sequence spans 159 residues: Transcription repressor OFP6 (159 aa).

The interval 39–60 is disordered; it reads PKRPSSTYRHCHSSISSATPSS. Over residues 51–60 the composition is skewed to low complexity; sequence SSISSATPSS. The 60-residue stretch at 70–129 folds into the OVATE domain; that stretch reads VEKDSDDPYLDFRQSMLQMILENQIYSKDELRELLQCFLSLNSHYHHGIIVRAFSEIWED.

Interacts with KNAT1 and KNAT7. Expressed in roots, shoots, rosette and cauline leaves, stems, flower buds and siliques.

Its subcellular location is the nucleus. Functionally, transcriptional repressor that regulates multiple aspects of plant growth and development through the regulation of BEL1-LIKE (BLH) and KNOX TALE (KNAT) homeodomain transcription factors. This Arabidopsis thaliana (Mouse-ear cress) protein is Transcription repressor OFP6 (OFP6).